A 236-amino-acid polypeptide reads, in one-letter code: Glycosylphosphatidylinositol anchor biosynthesis protein 11 (236 aa).

The next 2 membrane-spanning stretches (helical) occupy residues 40–60 and 65–85; these read TLTI…FGLT and GVML…GYLI. An N-linked (GlcNAc...) asparagine glycan is attached at N99. A run of 4 helical transmembrane segments spans residues 107 to 127, 139 to 159, 184 to 204, and 215 to 235; these read LLAG…VALI, ETYL…LVLY, ILLS…PIPL, and ITLL…CFLF.

The protein belongs to the PIGF family.

Its subcellular location is the endoplasmic reticulum membrane. Its pathway is glycolipid biosynthesis; glycosylphosphatidylinositol-anchor biosynthesis. Its function is as follows. Acts in the GPI biosynthetic pathway between GlcNAc-PI synthesis and GPI transfer to protein. This is Glycosylphosphatidylinositol anchor biosynthesis protein 11 (GPI11) from Debaryomyces hansenii (strain ATCC 36239 / CBS 767 / BCRC 21394 / JCM 1990 / NBRC 0083 / IGC 2968) (Yeast).